The chain runs to 319 residues: rRNA adenine N-6-methyltransferase (319 aa).

Residues 1–59 (MARAPRSPHPARSRETSRAHPPYGTRADRAPGRGRDRDRSPDSPGNTSSRDGGRSPDRA) are disordered. The segment covering 26–41 (RADRAPGRGRDRDRSP) has biased composition (basic and acidic residues). S-adenosyl-L-methionine-binding residues include Asn66, Leu68, Gly93, Glu114, Asp141, and Asn157.

This sequence belongs to the class I-like SAM-binding methyltransferase superfamily. rRNA adenine N(6)-methyltransferase family.

The enzyme catalyses adenosine(2085) in 23S rRNA + 2 S-adenosyl-L-methionine = N(6)-dimethyladenosine(2085) in 23S rRNA + 2 S-adenosyl-L-homocysteine + 2 H(+). Its function is as follows. This protein produces a dimethylation of the adenine residue at position 2085 in 23S rRNA, resulting in reduced affinity between ribosomes and macrolide-lincosamide-streptogramin B antibiotics. The protein is rRNA adenine N-6-methyltransferase (ermSF) of Streptomyces fradiae (Streptomyces roseoflavus).